We begin with the raw amino-acid sequence, 437 residues long: Branched-chain amino acid transport system 2 carrier protein (437 aa).

Helical transmembrane passes span 9–29 (LLAL…IIFP), 43–63 (AAFG…VALA), 80–100 (AGVA…ATPR), 117–137 (GGVP…FLVL), 149–169 (VITP…IFAP), 192–212 (GYLT…ATAI), 228–248 (MIAG…LFYL), 280–300 (LLLA…LITA), 308–328 (LLPV…LLVA), 335–355 (LISL…VLIA), 369–389 (VFVP…LGAA), and 404–424 (LADQ…LAVV).

Belongs to the branched chain amino acid transporter family.

It localises to the cell inner membrane. In terms of biological role, component of the LIV-II transport system for branched-chain amino acids. BraB is specific for isoleucine, leucine and valine. The LIV-II transport system is coupled to sodium and lithium ions. This chain is Branched-chain amino acid transport system 2 carrier protein (braB), found in Pseudomonas aeruginosa (strain ATCC 15692 / DSM 22644 / CIP 104116 / JCM 14847 / LMG 12228 / 1C / PRS 101 / PAO1).